Consider the following 144-residue polypeptide: Small ribosomal subunit protein eS19B (144 aa).

The protein belongs to the eukaryotic ribosomal protein eS19 family. Component of the small ribosomal subunit (SSU). Mature yeast ribosomes consist of a small (40S) and a large (60S) subunit. The 40S small subunit contains 1 molecule of ribosomal RNA (18S rRNA) and 33 different proteins (encoded by 57 genes). The large 60S subunit contains 3 rRNA molecules (25S, 5.8S and 5S rRNA) and 46 different proteins (encoded by 81 genes).

The protein resides in the cytoplasm. Functionally, component of the ribosome, a large ribonucleoprotein complex responsible for the synthesis of proteins in the cell. The small ribosomal subunit (SSU) binds messenger RNAs (mRNAs) and translates the encoded message by selecting cognate aminoacyl-transfer RNA (tRNA) molecules. The large subunit (LSU) contains the ribosomal catalytic site termed the peptidyl transferase center (PTC), which catalyzes the formation of peptide bonds, thereby polymerizing the amino acids delivered by tRNAs into a polypeptide chain. The nascent polypeptides leave the ribosome through a tunnel in the LSU and interact with protein factors that function in enzymatic processing, targeting, and the membrane insertion of nascent chains at the exit of the ribosomal tunnel. eS19 is required for proper maturation of the small (40S) ribosomal subunit. Binds to 40S pre-ribosomal particles, probably required after association of NOC4 but before association of ENP1, TSR1 and RIO2 with 20/21S pre-rRNA. Its function is as follows. Required for proper maturation of the small (40S) ribosomal subunit. Binds to 40s pre-ribosomal particles, probably required after association of NOC4 but before association of ENP1, TSR1 and RIO2 with 20/21S pre-rRNA. This Saccharomyces cerevisiae (strain ATCC 204508 / S288c) (Baker's yeast) protein is Small ribosomal subunit protein eS19B.